A 137-amino-acid polypeptide reads, in one-letter code: Acidic phospholipase A2 VP8 (137 aa).

The first 16 residues, 1–16 (MRILWIVAVCLIGVEG), serve as a signal peptide directing secretion. Disulfide bonds link Cys41–Cys130, Cys43–Cys59, Cys58–Cys110, Cys64–Cys137, Cys65–Cys103, Cys72–Cys96, and Cys90–Cys101. Residues Tyr42, Gly44, and Gly46 each coordinate Ca(2+). His62 is an active-site residue. Asp63 is a binding site for Ca(2+). Asp104 is an active-site residue.

This sequence belongs to the phospholipase A2 family. Group II subfamily. D49 sub-subfamily. As to quaternary structure, does not form a complex. It depends on Ca(2+) as a cofactor. Expressed by the venom gland.

It localises to the secreted. It carries out the reaction a 1,2-diacyl-sn-glycero-3-phosphocholine + H2O = a 1-acyl-sn-glycero-3-phosphocholine + a fatty acid + H(+). Functionally, snake venom phospholipase A2 (PLA2) that is not toxic by itself, but the synergistical mixture of a basic and this acidic protein is lethal. PLA2 catalyzes the calcium-dependent hydrolysis of the 2-acyl groups in 3-sn-phosphoglycerides. This chain is Acidic phospholipase A2 VP8, found in Daboia palaestinae (Palestine viper).